Here is a 78-residue protein sequence, read N- to C-terminus: MNSVGEECTDMKREYDQCFNRWFAEKFLKGECSGDPCTELFRRYRDCVQKAIKDKDIPVDGVDFMGPSKSKTESDGSS.

The stretch at 1–52 (MNSVGEECTDMKREYDQCFNRWFAEKFLKGECSGDPCTELFRRYRDCVQKAI) forms a coiled coil. The 51-residue stretch at 5-55 (GEECTDMKREYDQCFNRWFAEKFLKGECSGDPCTELFRRYRDCVQKAIKDK) folds into the CHCH domain. 2 consecutive short sequence motifs (cx9C motif) follow at residues 8-18 (CTDMKREYDQC) and 37-47 (CTELFRRYRDC). 2 disulfide bridges follow: Cys-8–Cys-47 and Cys-18–Cys-37.

The protein belongs to the TRIAP1/MDM35 family. Monomer. Forms a complex with prelid1 in the mitochondrion intermembrane space. Interacts with prelid3a. As to expression, expressed in the developing pronephros.

It is found in the mitochondrion. It localises to the mitochondrion intermembrane space. The catalysed reaction is a 1,2-diacyl-sn-glycero-3-phosphate(in) = a 1,2-diacyl-sn-glycero-3-phosphate(out). In terms of biological role, involved in the modulation of the mitochondrial apoptotic pathway by ensuring the accumulation of cardiolipin (CL) in mitochondrial membranes. The triap1:prelid1 complex probably functions as a phosphatidic acid (PA) transporter across the mitochondrion intermembrane space to provide PA for cardiolipin CL synthesis in the inner membrane. Likewise, the triap1:prelid3a complex mediates the transfer of phosphatidic acid (PA) between liposomes (in vitro) and probably functions as a PA transporter across the mitochondrion intermembrane space (in vivo). Mediates cell survival by inhibiting activation of caspase-9 which prevents induction of apoptosis. Required for pronephros development; probably involved at an early stage in the formation of pronephric components derived from the somatic layer. The polypeptide is TP53-regulated inhibitor of apoptosis 1 (Xenopus tropicalis (Western clawed frog)).